Reading from the N-terminus, the 352-residue chain is Endophilin-A1 (352 aa).

Residues 1 to 21 (MSVAGLKKQFHKATQKVSEKV) form a membrane-binding amphipathic helix region. The segment at 1–27 (MSVAGLKKQFHKATQKVSEKVGGAEGT) is disordered. A binds and tubulates liposomes region spans residues 1–125 (MSVAGLKKQF…EVGEAMRELS (125 aa)). One can recognise a BAR domain in the interval 18 to 249 (SEKVGGAEGT…LEERIRQASS (232 aa)). The required for dimerization upon membrane association stretch occupies residues 60 to 87 (PNPASRAKLSMINTMSKIRGQEKGPGYP). Residues 181 to 248 (EELRQALEKF…RLEERIRQAS (68 aa)) adopt a coiled-coil conformation. Phosphoserine is present on serine 262. Positions 264 to 289 (EFATGDSTQPNGGLSHTGTPKPPGVQ) are disordered. A compositionally biased stretch (polar residues) spans 268–281 (GDSTQPNGGLSHTG). The region spanning 290 to 349 (MDQPCCRALYDFEPENEGELGFKEGDIITLTNQIDENWYEGMLHGQSGFFPINYVEILVA) is the SH3 domain. Tyrosine 299 carries the phosphotyrosine modification.

It belongs to the endophilin family. In terms of assembly, monomer; in cytoplasm. Homodimer; when associated with membranes. Interacts with SYNJ1. Interacts with DNM1. Interacts with MAP4K3; the interaction appears to regulate MAP4K3-mediated JNK activation. Interacts with OPHN1. Interacts with PDCD6IP. Interacts with BIN2. Interacts with ATXN2. Interacts with ADAM9 and ADAM15 cytoplasmic tails. Interacts with TMEM108. Interacts with ADGRB2.

The protein localises to the cytoplasm. The protein resides in the membrane. It localises to the early endosome. Its subcellular location is the presynapse. Functionally, implicated in synaptic vesicle endocytosis. May recruit other proteins to membranes with high curvature. Required for BDNF-dependent dendrite outgrowth. Cooperates with SH3GL2 to mediate BDNF-NTRK2 early endocytic trafficking and signaling from early endosomes. The protein is Endophilin-A1 (Sh3gl2) of Mus musculus (Mouse).